Here is a 356-residue protein sequence, read N- to C-terminus: Phosphoserine aminotransferase (356 aa).

Arginine 41 lines the L-glutamate pocket. Residues 75 to 76 (AT), tryptophan 100, threonine 147, aspartate 166, and glutamine 189 contribute to the pyridoxal 5'-phosphate site. An N6-(pyridoxal phosphate)lysine modification is found at lysine 190. Residue 227–228 (NT) coordinates pyridoxal 5'-phosphate.

The protein belongs to the class-V pyridoxal-phosphate-dependent aminotransferase family. SerC subfamily. In terms of assembly, homodimer. Requires pyridoxal 5'-phosphate as cofactor.

It is found in the cytoplasm. It carries out the reaction O-phospho-L-serine + 2-oxoglutarate = 3-phosphooxypyruvate + L-glutamate. The catalysed reaction is 4-(phosphooxy)-L-threonine + 2-oxoglutarate = (R)-3-hydroxy-2-oxo-4-phosphooxybutanoate + L-glutamate. The protein operates within amino-acid biosynthesis; L-serine biosynthesis; L-serine from 3-phospho-D-glycerate: step 2/3. Functionally, catalyzes the reversible conversion of 3-phosphohydroxypyruvate to phosphoserine and of 3-hydroxy-2-oxo-4-phosphonooxybutanoate to phosphohydroxythreonine. The polypeptide is Phosphoserine aminotransferase (Exiguobacterium sp. (strain ATCC BAA-1283 / AT1b)).